Reading from the N-terminus, the 424-residue chain is Interferon regulatory factor 8 (424 aa).

Residues 7 to 114 constitute a DNA-binding region (IRF tryptophan pentad repeat); that stretch reads GRRLRQWLIE…EPYKVYRIVP (108 aa).

It belongs to the IRF family. In terms of assembly, interacts with COPS2. Interacts (via C-terminus) with TRIM21 (via C-terminus). Interacts with the BATF-JUNB heterodimer. Interacts with BATF (via bZIP domain); the interaction is direct. Interacts with SPI1. Ubiquitinated. Ubiquitination by TRIM21 in macrophages, a process that is strongly increased upon interferon gamma stimulation, leds to the enhanced transcriptional activity of target cytokine genes. Ubiquitination leads to its degradation by the proteasome. In terms of processing, sumoylated with SUMO3. Desumoylated by SENP1. As to expression, expressed in bone marrow macrophages (at protein level). Mainly expressed in lymphoid tissues. Predominantly expressed in CD8(+)-expressing dendritic cells.

It is found in the nucleus. Its subcellular location is the cytoplasm. In terms of biological role, transcription factor that specifically binds to the upstream regulatory region of type I interferon (IFN) and IFN-inducible MHC class I genes (the interferon consensus sequence (ICS)). Can both act as a transcriptional activator or repressor. Plays a negative regulatory role in cells of the immune system. Involved in CD8(+) dendritic cell differentiation by forming a complex with the BATF-JUNB heterodimer in immune cells, leading to recognition of AICE sequence (5'-TGAnTCA/GAAA-3'), an immune-specific regulatory element, followed by cooperative binding of BATF and IRF8 and activation of genes. Required for the development of plasmacytoid dendritic cells (pDCs), which produce most of the type I IFN in response to viral infection. Positively regulates macroautophagy in dendritic cells. Acts as a transcriptional repressor of osteoclast differentiation factors such as NFATC1 and EEIG1. This chain is Interferon regulatory factor 8, found in Mus musculus (Mouse).